Reading from the N-terminus, the 662-residue chain is MTLYDEDNINLIKDDLRYLKLLSTKYHNIPSACSEIINLQAILNLPKGTEHFISDIHGEYESFTHMLKNASGVIKRKLDDIFGTSLMDKDKDSLATLIYYPKEKLEILKESNNDLEEWYKVTLYRLIQVCKSVSSKYTRSKVRKALPKNFSYIIEELLNEQADRVNKQEYYSGIINTIVDIGCADSLIIEISKVIQKLVVDRLHIIGDIYDRGPGAEIIMDALMDHHSMDIQWGNHDILWMGAASGSKACTANVLRISLRYANLSTVEDGYGINLLPLATFAMKYYGNDPCESFIPKALDKMLDESDKNLYAKMHKAISIIQFKLEGQKIKRHPEFKLENMLLLDKINFDDGTITFEGSTYKLNDTNLPTIDPKNPYKLTKEESELIEKLQGSFLNSEKLQKHIRFMYSIGSLYLVYNSNLLFHGCIPLNEDSSFRTLNICNKEYSGKSLLDLFDKYAREAYYYKDDDNVKNYAMDMMWYLWCGPISPLFGKHKMTTFERYFIDDKKTHKEIKDPYYTYRDSEELCNRIFEEFQLDLEKSHIINGHIPVKTKNGESPVMANGKLLVIDGGFCKAYQPQTGIAGYTLIYNSYGFLLSSHEPFESTKKAIEEEQDILSSTVILENSVTRKRVMDTDIGKELKEQIKNLKKLLVAYRKGLIQENI.

Belongs to the FBPase class 3 family. It depends on Mn(2+) as a cofactor.

The catalysed reaction is beta-D-fructose 1,6-bisphosphate + H2O = beta-D-fructose 6-phosphate + phosphate. Its pathway is carbohydrate biosynthesis; gluconeogenesis. This Clostridium tetani (strain Massachusetts / E88) protein is Fructose-1,6-bisphosphatase class 3.